A 166-amino-acid chain; its full sequence is Lipoprotein signal peptidase (166 aa).

A run of 3 helical transmembrane segments spans residues 12 to 32 (LPIALFILVALVADQAIKYLV), 66 to 86 (MEGWFIVGMRLAVVAFVLWLW), and 101 to 121 (AMIIAGALGNLVDRLLFGYVI). Catalysis depends on residues D122 and D140. A helical membrane pass occupies residues 132–152 (SFAVFNLADSFITVGAGAIIL).

This sequence belongs to the peptidase A8 family.

The protein localises to the cell inner membrane. It catalyses the reaction Release of signal peptides from bacterial membrane prolipoproteins. Hydrolyzes -Xaa-Yaa-Zaa-|-(S,diacylglyceryl)Cys-, in which Xaa is hydrophobic (preferably Leu), and Yaa (Ala or Ser) and Zaa (Gly or Ala) have small, neutral side chains.. The protein operates within protein modification; lipoprotein biosynthesis (signal peptide cleavage). In terms of biological role, this protein specifically catalyzes the removal of signal peptides from prolipoproteins. The polypeptide is Lipoprotein signal peptidase (Sinorhizobium fredii (strain NBRC 101917 / NGR234)).